A 514-amino-acid chain; its full sequence is Sugar transport protein 10 (514 aa).

The Cytoplasmic segment spans residues 1 to 18 (MAGGAFVSEGGGGGRSYE). 10 consecutive transmembrane segments (helical) span residues 19–39 (GGVTAFVIMTCIVAAMGGLLF), 86–106 (LFTSSLYLAALVASFMASVIT), 113–133 (VSMFIGGLAFLIGALFNAFAV), 135–155 (VSMLIIGRLLLGVGVGFANQS), 170–190 (GALNIGFQMAITIGILVANLI), 204–224 (VSLGLAAVPAVVMVIGSFILP), 285–305 (LIFCSAIPFFQQITGINVIMF), 320–340 (AALMSAVITGVVNMLSTFVSI), 350–370 (LLFLEGGIQMFICQLLVGSFI), and 389–409 (WILAFICVYVAGFAWSWGPLG). C77 and C449 are joined by a disulfide. Q177 is a beta-D-glucose binding site. Beta-D-glucose contacts are provided by Q295, Q296, N301, and N332. A beta-D-glucose-binding site is contributed by W410. 2 helical membrane passes run 428 to 448 (INVSVNMFFTFLIGQFFLTML) and 453 to 473 (FGLFYFFASMVAIMTVFIYFL). The Cytoplasmic portion of the chain corresponds to 474-514 (LPETKGVPIEEMGRVWKQHWFWKKYIPEDAIIGGHDDNNTN).

The protein belongs to the major facilitator superfamily. Sugar transporter (TC 2.A.1.1) family. In terms of tissue distribution, expressed in primordia of lateral roots, pollinated stigmata, and pollen tubes.

The protein resides in the membrane. The catalysed reaction is D-glucose(out) + H(+)(out) = D-glucose(in) + H(+)(in). It carries out the reaction D-mannose(out) + H(+)(out) = D-mannose(in) + H(+)(in). The enzyme catalyses D-galactose(in) + H(+)(in) = D-galactose(out) + H(+)(out). Hexose-H(+) symporter that catalyzes the high-affinity uptake of glucose, galactose and mannose. Proton-coupled symporter responsible for the uptake of glucose from the apoplast into the cells. This chain is Sugar transport protein 10, found in Arabidopsis thaliana (Mouse-ear cress).